The chain runs to 206 residues: Thymidylate kinase (206 aa).

An ATP-binding site is contributed by Gly-11–Thr-18.

This sequence belongs to the thymidylate kinase family.

The enzyme catalyses dTMP + ATP = dTDP + ADP. Phosphorylation of dTMP to form dTDP in both de novo and salvage pathways of dTTP synthesis. This chain is Thymidylate kinase, found in Burkholderia pseudomallei (strain 1106a).